A 121-amino-acid chain; its full sequence is MGTTIHEETSAAQPPLNFTDGAASKVKELIEEEDNQALKLRVFVSGGGCSGFQYGFTFDEIVNEDDFVMEKQGVKLLVDSMSFQYLVGAEIDYQESAQGAQFVIKNPSAASTCGCGSSFSV.

Residues Cys49, Cys113, and Cys115 each contribute to the iron-sulfur cluster site.

The protein belongs to the HesB/IscA family. Homodimer. It depends on iron-sulfur cluster as a cofactor.

Required for insertion of 4Fe-4S clusters. The protein is Putative iron-sulfur cluster insertion protein ErpA of Nitrosomonas europaea (strain ATCC 19718 / CIP 103999 / KCTC 2705 / NBRC 14298).